Consider the following 299-residue polypeptide: NmrA-like family domain-containing protein 1 (299 aa).

NADP(+)-binding positions include 11-16 (GGTGAQ), 37-41 (RNPRK), 58-59 (DQ), Q62, 79-81 (TNY), K92, K133, and 155-158 (YFEN). The interaction with ASS1 stretch occupies residues 153–189 (PCYFENLLSHFLPQKAPDGKSYLLSLPTGDVPMDGMS).

This sequence belongs to the NmrA-type oxidoreductase family. In terms of assembly, homodimer. Interacts with ASS1. Interaction is enhanced by low NADPH/NADP(+) ratios, which results in inhibition of ASS1 activity.

It is found in the cytoplasm. The protein localises to the perinuclear region. The protein resides in the nucleus. Its function is as follows. Redox sensor protein. Undergoes restructuring and subcellular redistribution in response to changes in intracellular NADPH/NADP(+) levels. At low NADPH concentrations the protein is found mainly as a monomer, and binds argininosuccinate synthase (ASS1), the enzyme involved in nitric oxide synthesis. Association with ASS1 impairs its activity and reduces the production of nitric oxide, which subsecuently prevents apoptosis. Under normal NADPH concentrations, the protein is found as a dimer and hides the binding site for ASS1. The homodimer binds one molecule of NADPH. Has higher affinity for NADPH than for NADP(+). Binding to NADPH is necessary to form a stable dimer. The sequence is that of NmrA-like family domain-containing protein 1 (NMRAL1) from Homo sapiens (Human).